The chain runs to 628 residues: Propionate--CoA ligase (628 aa).

The protein belongs to the ATP-dependent AMP-binding enzyme family.

It carries out the reaction propanoate + ATP + CoA = propanoyl-CoA + AMP + diphosphate. The protein operates within organic acid metabolism; propanoate degradation. Functionally, catalyzes the synthesis of propionyl-CoA from propionate and CoA. Also converts acetate to acetyl-CoA but with a lower specific activity. This Escherichia coli (strain K12) protein is Propionate--CoA ligase (prpE).